We begin with the raw amino-acid sequence, 609 residues long: Wee1-like protein kinase (609 aa).

Basic and acidic residues predominate over residues 1 to 10 (MAFRQSEHEM). Disordered regions lie at residues 1 to 88 (MAFR…SMSP) and 147 to 166 (PLHNRKLPTQDTANVNPFTP). A phosphoserine mark is found at Ser-23, Ser-25, and Ser-27. Residues 37–48 (RFADDDFDKDTP) are compositionally biased toward basic and acidic residues. Phosphothreonine is present on Thr-47. A Phosphoserine modification is found at Ser-52. Residues 153–165 (LPTQDTANVNPFT) show a composition bias toward polar residues. Thr-165 is modified (phosphothreonine). Ser-168 carries the phosphoserine modification. In terms of domain architecture, Protein kinase spans 239 to 517 (FMQVNVIGVG…SQSIFSHPIL (279 aa)). Residues 245–253 (IGVGEFGVV) and Lys-268 each bind ATP. The Proton acceptor role is filled by Asp-361. Mg(2+)-binding residues include Asn-366 and Asp-412.

Belongs to the protein kinase superfamily. Ser/Thr protein kinase family. WEE1 subfamily. Requires Mg(2+) as cofactor. Phosphorylated during M and G1 phases. Expressed in embryos; expression remains high in the proliferating cells of the central nervous system well after cells in the rest of the embryo have ceased dividing.

The protein localises to the nucleus. It carries out the reaction L-tyrosyl-[protein] + ATP = O-phospho-L-tyrosyl-[protein] + ADP + H(+). With respect to regulation, negatively regulated by phosphorylation in the M-phase. Acts as a negative regulator of entry into mitosis (G2 to M transition). This kinase specifically phosphorylates and inactivates cyclin B1-complexed CDC2. The sequence is that of Wee1-like protein kinase from Drosophila melanogaster (Fruit fly).